The sequence spans 466 residues: ATP synthase subunit beta (466 aa).

156 to 163 is a binding site for ATP; that stretch reads GGAGVGKT.

This sequence belongs to the ATPase alpha/beta chains family. As to quaternary structure, F-type ATPases have 2 components, CF(1) - the catalytic core - and CF(0) - the membrane proton channel. CF(1) has five subunits: alpha(3), beta(3), gamma(1), delta(1), epsilon(1). CF(0) has three main subunits: a(1), b(2) and c(9-12). The alpha and beta chains form an alternating ring which encloses part of the gamma chain. CF(1) is attached to CF(0) by a central stalk formed by the gamma and epsilon chains, while a peripheral stalk is formed by the delta and b chains.

It localises to the cell inner membrane. It carries out the reaction ATP + H2O + 4 H(+)(in) = ADP + phosphate + 5 H(+)(out). Its function is as follows. Produces ATP from ADP in the presence of a proton gradient across the membrane. The catalytic sites are hosted primarily by the beta subunits. This chain is ATP synthase subunit beta, found in Dechloromonas aromatica (strain RCB).